The following is a 2430-amino-acid chain: Protein TASOR 2 (2430 aa).

A phosphoserine mark is found at Ser19, Ser219, and Ser384. Disordered regions lie at residues 416-488 (LDRK…GETA) and 577-648 (RGTS…SQSS). A Phosphoserine modification is found at Ser685. The tract at residues 704–727 (LLLQQKPPDDPVVKPKDRPPSARV) is disordered. Over residues 710-723 (PPDDPVVKPKDRPP) the composition is skewed to basic and acidic residues. A phosphoserine mark is found at Ser1025, Ser1087, and Ser1172. Positions 1331–1360 (LTESREVSSADNVSVYPSVSEEPVENKERK) are disordered. At Ser1541 the chain carries Phosphoserine. Residues 1700-1727 (EAELHKETTGPGTAGPQSNTTSSLKGER) are disordered. Residues 1714-1723 (GPQSNTTSSL) are compositionally biased toward polar residues. A Phosphoserine modification is found at Ser1848. A Glycyl lysine isopeptide (Lys-Gly) (interchain with G-Cter in SUMO2) cross-link involves residue Lys2007. A phosphoserine mark is found at Ser2009, Ser2037, Ser2062, and Ser2066. The segment at 2046 to 2069 (SDPRPQGQPRRGYTASSLDSSSSW) is disordered.

The protein belongs to the TASOR family.

The polypeptide is Protein TASOR 2 (Homo sapiens (Human)).